A 185-amino-acid polypeptide reads, in one-letter code: Large ribosomal subunit protein uL6m (185 aa).

Belongs to the universal ribosomal protein uL6 family.

Its subcellular location is the mitochondrion. In Reclinomonas americana, this protein is Large ribosomal subunit protein uL6m (RPL6).